The following is a 338-amino-acid chain: Ribosomal RNA small subunit methyltransferase C (338 aa).

It belongs to the methyltransferase superfamily. RsmC family. In terms of assembly, monomer.

It localises to the cytoplasm. The enzyme catalyses guanosine(1207) in 16S rRNA + S-adenosyl-L-methionine = N(2)-methylguanosine(1207) in 16S rRNA + S-adenosyl-L-homocysteine + H(+). Specifically methylates the guanine in position 1207 of 16S rRNA in the 30S particle. This Acinetobacter baylyi (strain ATCC 33305 / BD413 / ADP1) protein is Ribosomal RNA small subunit methyltransferase C.